Consider the following 393-residue polypeptide: Arginine biosynthesis bifunctional protein ArgJ (393 aa).

Positions 142, 168, 179, 265, 388, and 393 each coordinate substrate. Thr-179 functions as the Nucleophile in the catalytic mechanism.

This sequence belongs to the ArgJ family. In terms of assembly, heterotetramer of two alpha and two beta chains.

The protein localises to the cytoplasm. The enzyme catalyses N(2)-acetyl-L-ornithine + L-glutamate = N-acetyl-L-glutamate + L-ornithine. The catalysed reaction is L-glutamate + acetyl-CoA = N-acetyl-L-glutamate + CoA + H(+). It participates in amino-acid biosynthesis; L-arginine biosynthesis; L-ornithine and N-acetyl-L-glutamate from L-glutamate and N(2)-acetyl-L-ornithine (cyclic): step 1/1. It functions in the pathway amino-acid biosynthesis; L-arginine biosynthesis; N(2)-acetyl-L-ornithine from L-glutamate: step 1/4. Its function is as follows. Catalyzes two activities which are involved in the cyclic version of arginine biosynthesis: the synthesis of N-acetylglutamate from glutamate and acetyl-CoA as the acetyl donor, and of ornithine by transacetylation between N(2)-acetylornithine and glutamate. The polypeptide is Arginine biosynthesis bifunctional protein ArgJ (Geobacter sulfurreducens (strain ATCC 51573 / DSM 12127 / PCA)).